Consider the following 145-residue polypeptide: Protein SprT-like (145 aa).

One can recognise a SprT-like domain in the interval 4 to 140; that stretch reads TNYVQEVSLA…VCGNCHGKLI (137 aa). Histidine 64 contributes to the Zn(2+) binding site. Residue glutamate 65 is part of the active site. Histidine 68 lines the Zn(2+) pocket.

The protein belongs to the SprT family. Requires Zn(2+) as cofactor.

It localises to the cytoplasm. The chain is Protein SprT-like from Streptococcus pyogenes serotype M18 (strain MGAS8232).